Consider the following 245-residue polypeptide: Carboxy-S-adenosyl-L-methionine synthase (245 aa).

S-adenosyl-L-methionine-binding positions include Tyr39, Gly64–Ser66, Asp117–Ile118, and Arg199.

This sequence belongs to the class I-like SAM-binding methyltransferase superfamily. Cx-SAM synthase family. In terms of assembly, homodimer.

The catalysed reaction is prephenate + S-adenosyl-L-methionine = carboxy-S-adenosyl-L-methionine + 3-phenylpyruvate + H2O. Catalyzes the conversion of S-adenosyl-L-methionine (SAM) to carboxy-S-adenosyl-L-methionine (Cx-SAM). This is Carboxy-S-adenosyl-L-methionine synthase from Desulfotalea psychrophila (strain LSv54 / DSM 12343).